The chain runs to 82 residues: ATP synthase subunit c (82 aa).

A run of 2 helical transmembrane segments spans residues leucine 7–isoleucine 27 and phenylalanine 53–phenylalanine 73.

This sequence belongs to the ATPase C chain family. F-type ATPases have 2 components, F(1) - the catalytic core - and F(0) - the membrane proton channel. F(1) has five subunits: alpha(3), beta(3), gamma(1), delta(1), epsilon(1). F(0) has three main subunits: a(1), b(2) and c(10-14). The alpha and beta chains form an alternating ring which encloses part of the gamma chain. F(1) is attached to F(0) by a central stalk formed by the gamma and epsilon chains, while a peripheral stalk is formed by the delta and b chains.

The protein localises to the cell inner membrane. Its function is as follows. F(1)F(0) ATP synthase produces ATP from ADP in the presence of a proton or sodium gradient. F-type ATPases consist of two structural domains, F(1) containing the extramembraneous catalytic core and F(0) containing the membrane proton channel, linked together by a central stalk and a peripheral stalk. During catalysis, ATP synthesis in the catalytic domain of F(1) is coupled via a rotary mechanism of the central stalk subunits to proton translocation. In terms of biological role, key component of the F(0) channel; it plays a direct role in translocation across the membrane. A homomeric c-ring of between 10-14 subunits forms the central stalk rotor element with the F(1) delta and epsilon subunits. This chain is ATP synthase subunit c, found in Acidovorax ebreus (strain TPSY) (Diaphorobacter sp. (strain TPSY)).